The primary structure comprises 383 residues: MRNARSTLITTAGMAFAVLGLLFALAGPSAGRAEAAAGGIHVSNGRVVEGNGSAFVMRGVNHAYTWYPDRTGSIADIAAKGANTVRVVLSSGGRWTKTSASEVSALIGQCKANKVICVLEVHDTTGYGKDGATSLDQAGDYWVGVKSAAWRAQEDYVVVNIGNEPFGNTNYAAWTDATKSAIGKLRGAGLGHALMVDAPNWGQDWSGTMRSNAASVFASDPDRNTVFSIHMYGVYDTAAEVRDYLNAFVGNGLPIVVGEFGDQHSDGNPDEDAIMATAQSLGVGYLGWSWSGNGGGVEYLDMVNGFDPNSLTSWGNRILYGSNGIAATSRTATVYGGGGGSTGGTAPNGYPYCVNGGASDPDGDGWGWENSRSCVVRGSAADH.

A signal peptide spans 1–35 (MRNARSTLITTAGMAFAVLGLLFALAGPSAGRAEA). Positions 339–377 (GGSTGGTAPNGYPYCVNGGASDPDGDGWGWENSRSCVVR) constitute a CBM10 domain.

The protein belongs to the glycosyl hydrolase 5 (cellulase A) family. Monomer.

It carries out the reaction Random hydrolysis of (1-&gt;4)-beta-D-mannosidic linkages in mannans, galactomannans and glucomannans.. The polypeptide is Mannan endo-1,4-beta-mannosidase (manA) (Streptomyces lividans).